The primary structure comprises 397 residues: S-adenosylmethionine:tRNA ribosyltransferase-isomerase (397 aa).

The protein belongs to the QueA family. In terms of assembly, monomer.

It is found in the cytoplasm. The enzyme catalyses 7-aminomethyl-7-carbaguanosine(34) in tRNA + S-adenosyl-L-methionine = epoxyqueuosine(34) in tRNA + adenine + L-methionine + 2 H(+). Its pathway is tRNA modification; tRNA-queuosine biosynthesis. Its function is as follows. Transfers and isomerizes the ribose moiety from AdoMet to the 7-aminomethyl group of 7-deazaguanine (preQ1-tRNA) to give epoxyqueuosine (oQ-tRNA). The polypeptide is S-adenosylmethionine:tRNA ribosyltransferase-isomerase (Nostoc sp. (strain PCC 7120 / SAG 25.82 / UTEX 2576)).